We begin with the raw amino-acid sequence, 317 residues long: Probable cell division protein WhiA (317 aa).

The H-T-H motif DNA-binding region spans 275 to 308 (SLKELGEMLVPKVGKSGVNHRMRKIDELAEKLEE).

It belongs to the WhiA family.

Its function is as follows. Involved in cell division and chromosome segregation. In Desulfitobacterium hafniense (strain Y51), this protein is Probable cell division protein WhiA.